The primary structure comprises 256 residues: Type III pantothenate kinase (256 aa).

6–13 (DIGNSSIV) lines the ATP pocket. Residues Tyr-101 and 108–111 (GADR) each bind substrate. Asp-110 (proton acceptor) is an active-site residue. Asp-130 is a binding site for K(+). Thr-133 is an ATP binding site. Thr-185 serves as a coordination point for substrate.

The protein belongs to the type III pantothenate kinase family. In terms of assembly, homodimer. NH4(+) serves as cofactor. K(+) is required as a cofactor.

It is found in the cytoplasm. The catalysed reaction is (R)-pantothenate + ATP = (R)-4'-phosphopantothenate + ADP + H(+). It functions in the pathway cofactor biosynthesis; coenzyme A biosynthesis; CoA from (R)-pantothenate: step 1/5. Catalyzes the phosphorylation of pantothenate (Pan), the first step in CoA biosynthesis. The protein is Type III pantothenate kinase of Shouchella clausii (strain KSM-K16) (Alkalihalobacillus clausii).